We begin with the raw amino-acid sequence, 610 residues long: Transcription termination factor Rho (610 aa).

A disordered region spans residues 117–227; it reads EVSRRERRGA…GDGAEAELRQ (111 aa). Basic and acidic residues predominate over residues 118 to 131; the sequence is VSRRERRGASREAD. Over residues 178-187 the composition is skewed to polar residues; it reads GVEQQSSSLQ. Over residues 189–198 the composition is skewed to basic and acidic residues; the sequence is RGDDDGEGRQ. Basic residues predominate over residues 199-214; that stretch reads GRRGRRFRDRDRRRRG. Basic and acidic residues predominate over residues 215 to 227; that stretch reads ERSGDGAEAELRQ. Residues 231–309 enclose the Rho RNA-BD domain; it reads VQPVAGILDV…VRLDSINGGS (79 aa). ATP-binding positions include 352–357, 364–369, and arginine 395; these read GKGQRA and KAGKTT.

It belongs to the Rho family. Homohexamer. The homohexamer assembles into an open ring structure.

Facilitates transcription termination by a mechanism that involves Rho binding to the nascent RNA, activation of Rho's RNA-dependent ATPase activity, and release of the mRNA from the DNA template. The sequence is that of Transcription termination factor Rho from Mycobacterium leprae (strain TN).